A 219-amino-acid chain; its full sequence is GPI ethanolamine phosphate transferase, stabilizing subunit (219 aa).

The next 6 helical transmembrane spans lie at 11 to 31 (YTNL…SFFV), 42 to 62 (TWLC…YLVV), 86 to 106 (CFLM…APLI), 113 to 133 (FLFA…LLGP), 155 to 175 (LQIT…PIPL), and 189 to 209 (TLGA…WIYW).

This sequence belongs to the PIGF family. As to quaternary structure, part of the ethanolamine phosphate transferase 3 complex composed by PIGO and PIGF. Part of the ethanolamine phosphate transferase 2 complex with PIGG. PIGF is required to stabilize PIGG and PIGO.

The protein resides in the endoplasmic reticulum membrane. It functions in the pathway glycolipid biosynthesis; glycosylphosphatidylinositol-anchor biosynthesis. Its function is as follows. Stabilizing subunit of the ethanolamine phosphate transferase 3 and ethanolamine phosphate transferase 2 complexes that sequentially transfer an ethanolamine phosphate (EtNP) from a phosphatidylethanolamine (PE) to the 6-OH position of the third alpha-1,2-linked mannose and the second alpha-1,6-linked mannose of the alpha-D-Man-(1-&gt;2)-alpha-D-Man-(1-&gt;6)-2-PEtn-alpha-D-Man-(1-&gt;4)-alpha-D-GlcN-(1-&gt;6)-(1-radyl,2-acyl-sn-glycero-3-phospho)-2-acyl-inositol (also termed H6) intermediate to generate a 6-PEtn-alpha-D-Man-(1-&gt;2)-6-PEtn-alpha-D-Man-(1-&gt;6)-2-PEtn-alpha-D-Man-(1-&gt;4)-alpha-D-GlcN-(1-&gt;6)-(1-radyl,2-acyl-sn-glycero-3-phospho)-2-acyl-inositol (also termed H8). Participates in the tenth and eleventh steps of the glycosylphosphatidylinositol-anchor biosynthesis, in association with PIGO and PIGG, respectively. The sequence is that of GPI ethanolamine phosphate transferase, stabilizing subunit from Mus musculus (Mouse).